The primary structure comprises 312 residues: 2-phospho-L-lactate transferase (312 aa).

Residues Asp-50 and Lys-89 each coordinate 7,8-didemethyl-8-hydroxy-5-deazariboflavin.

This sequence belongs to the CofD family. Homodimer. Requires Mg(2+) as cofactor.

It carries out the reaction (2S)-lactyl-2-diphospho-5'-guanosine + 7,8-didemethyl-8-hydroxy-5-deazariboflavin = oxidized coenzyme F420-0 + GMP + H(+). It participates in cofactor biosynthesis; coenzyme F420 biosynthesis. Its function is as follows. Catalyzes the transfer of the 2-phospholactate moiety from (2S)-lactyl-2-diphospho-5'-guanosine to 7,8-didemethyl-8-hydroxy-5-deazariboflavin (FO) with the formation of oxidized coenzyme F420-0 and GMP. In Methanococcus vannielii (strain ATCC 35089 / DSM 1224 / JCM 13029 / OCM 148 / SB), this protein is 2-phospho-L-lactate transferase.